The chain runs to 267 residues: Orotidine 5'-phosphate decarboxylase (267 aa).

The residue at position 2 (serine 2) is an N-acetylserine. Substrate-binding positions include aspartate 37, 59–61 (KTH), and 91–100 (DRKFADIGNT). Lysine 93 functions as the Proton donor in the catalytic mechanism. Glycyl lysine isopeptide (Lys-Gly) (interchain with G-Cter in ubiquitin) cross-links involve residues lysine 93 and lysine 209. Substrate contacts are provided by tyrosine 217 and arginine 235. Lysine 253 is covalently cross-linked (Glycyl lysine isopeptide (Lys-Gly) (interchain with G-Cter in ubiquitin)).

Belongs to the OMP decarboxylase family.

It catalyses the reaction orotidine 5'-phosphate + H(+) = UMP + CO2. The protein operates within pyrimidine metabolism; UMP biosynthesis via de novo pathway; UMP from orotate: step 2/2. The chain is Orotidine 5'-phosphate decarboxylase (URA3) from Saccharomyces cerevisiae (strain ATCC 204508 / S288c) (Baker's yeast).